We begin with the raw amino-acid sequence, 521 residues long: Cytochrome P450 monooxygenase gloO (521 aa).

The signal sequence occupies residues 1–26; sequence MIAALFTTNLQLGAVGVFIFALLAFA. Cysteine 464 contacts heme.

It belongs to the cytochrome P450 family. The cofactor is heme.

The protein operates within mycotoxin biosynthesis. Functionally, cytochrome P450 monooxygenase; part of the gene cluster that mediates the biosynthesis of pneumocandins, lipohexapeptides of the echinocandin family that prevent fungal cell wall formation by non-competitive inhibition of beta-1,3-glucan synthase. The 10,12-dimethylmyristoyl side chain is synthesized by the reducing polyketide synthase gloL/GLPKS4. The thioesterase gloN/GLHYD exclusively interacts with gloL/GLPKS4 to maintain turnover of the polyketide side chain. The 10R,12S-dimethylmyristic acid is then transferred to the first thiolation domain of the nonribosomal peptide synthetase gloA/GLNRPS4 by the acyl-AMP ligase gloD/GLligase, followed by its acylation to L-ornithine to trigger elongation of the cyclic hexapeptide. L-ornithine, 4R-hydroxyl-L-proline (generated from L-proline by the dioxygenase gloF/GLOXY2), 3S-hydroxyl-L-homotyrosine (generated by gloG/GLHtyB, gloH/GLHtyA, gloI/GLHtyC, gloJ/GLHtyD and hydroxylated at C-3 by the dioxygenase gloM/GLOXY1), 3R-hydroxyl-L-glutamine (generated from L-glutamine probably by the dioxygenase gloE/GLOXY3) and 3S-hydroxyl-L-proline (generated from L-proline by the dioxygenase gloF/GLOXY2 to yield pneumocandin B0), or 3S-hydroxyl-4S-methyl-L-proline (generated from L-leucine by the dioxygenase gloC/GLOXY4 to yield pneumocandin A0) are sequentially added to the growing chain. The last C domain of gloA/GLNRPS4 is proposed to be responsible for cyclization by condensation to form the peptide bond between L-ornithine and 3S-hydroxyl-4S-methyl-L-proline (for pneumocandin A0) or 3S-hydroxyl-L-proline (for pneumocandin B0). Finally, the subsequent C-4 hydroxylation of 3S-hydroxyl-L-homotyrosine and L-ornithine dihydroxylation at C-4 and C-5 are performed by the cytochrome P450 monooxygenases gloP/GLP450-1 and gloO/GLP450-2, respectively. In Glarea lozoyensis (strain ATCC 20868 / MF5171), this protein is Cytochrome P450 monooxygenase gloO.